The chain runs to 258 residues: 5'-nucleotidase SurE (258 aa).

A divalent metal cation contacts are provided by Asp9, Asp10, Ser42, and Asn96.

The protein belongs to the SurE nucleotidase family. Requires a divalent metal cation as cofactor.

Its subcellular location is the cytoplasm. The catalysed reaction is a ribonucleoside 5'-phosphate + H2O = a ribonucleoside + phosphate. In terms of biological role, nucleotidase that shows phosphatase activity on nucleoside 5'-monophosphates. The chain is 5'-nucleotidase SurE from Campylobacter jejuni subsp. jejuni serotype O:2 (strain ATCC 700819 / NCTC 11168).